A 185-amino-acid polypeptide reads, in one-letter code: Ribosome-recycling factor (185 aa).

A disordered region spans residues 127–158 (AVRNTRQDANNKVKKLEKDKEISEDESKKAQE).

Belongs to the RRF family.

Its subcellular location is the cytoplasm. Functionally, responsible for the release of ribosomes from messenger RNA at the termination of protein biosynthesis. May increase the efficiency of translation by recycling ribosomes from one round of translation to another. The polypeptide is Ribosome-recycling factor (Helicobacter pylori (strain G27)).